A 960-amino-acid polypeptide reads, in one-letter code: ATPase 4, plasma membrane-type (960 aa).

The Cytoplasmic segment spans residues 1-69 (MTTTVEDNRE…EKKESKFLKF (69 aa)). Residues 70 to 89 (LGFMWNPLSWVMEAAAIMAI) form a helical membrane-spanning segment. The Extracellular segment spans residues 90 to 101 (ALANGGGKPPDW). The chain crosses the membrane as a helical span at residues 102 to 122 (QDFVGIITLLVINSTISFIEE). The Cytoplasmic segment spans residues 123 to 251 (NNAGNAAAAL…GHFQQVLTAI (129 aa)). A helical transmembrane segment spans residues 252–272 (GNFCICSIAVGMLIEIVVMYP). Residues 273 to 281 (IQHRAYRPG) lie on the Extracellular side of the membrane. The chain crosses the membrane as a helical span at residues 282 to 299 (IDNLLVLLIGGIPIAMPT). Topologically, residues 300–651 (VLSVTMAIGS…TSRAIFQRMK (352 aa)) are cytoplasmic. The active-site 4-aspartylphosphate intermediate is aspartate 337. The Mg(2+) site is built by aspartate 596 and aspartate 600. Residues 652 to 673 (NYTIYAVSITIRIVLGFMLLAL) traverse the membrane as a helical segment. The Extracellular segment spans residues 674–678 (IWQFD). Residues 679–701 (FPPFMVLIIAILNDGTIMTISKD) form a helical membrane-spanning segment. Residues 702 to 717 (RVKPSPLPDSWKLSEI) lie on the Cytoplasmic side of the membrane. Residues 718–738 (FATGVVFGSYMAMMTVIFFWV) traverse the membrane as a helical segment. Over 739-763 (SYKTDFFPRTFGVATLEKTAHDDFR) the chain is Extracellular. A helical membrane pass occupies residues 764–784 (KLASAIYLQVSIISQALIFVT). At 785-796 (RSRSWSFVERPG) the chain is on the cytoplasmic side. Residues 797–817 (IFLMIAFILAQLVATLIAVYA) form a helical membrane-spanning segment. At 818-825 (NWSFAAIE) the chain is on the extracellular side. The chain crosses the membrane as a helical span at residues 826–846 (GIGWGWAGVIWLYNIIFYIPL). Topologically, residues 847–960 (DFIKFFIRYA…IETIQQAYTV (114 aa)) are cytoplasmic. Position 893 is a phosphothreonine (threonine 893). The residue at position 942 (serine 942) is a Phosphoserine. The interval 958 to 960 (YTV) is interaction with 14-3-3 proteins. Threonine 959 bears the Phosphothreonine mark.

This sequence belongs to the cation transport ATPase (P-type) (TC 3.A.3) family. Type IIIA subfamily. In terms of assembly, binds to 14-3-3 proteins. The binding is induced by phosphorylation of Thr-959. Binding to 14-3-3 proteins activates the H(+)-ATPase. As to expression, expressed in guard cells and roots.

The protein localises to the cell membrane. The catalysed reaction is ATP + H2O + H(+)(in) = ADP + phosphate + 2 H(+)(out). The plasma membrane H(+) ATPase of plants and fungi generates a proton gradient that drives the active transport of nutrients by H(+)-symport. The resulting external acidification and/or internal alkinization may mediate growth responses. The protein is ATPase 4, plasma membrane-type (AHA4) of Arabidopsis thaliana (Mouse-ear cress).